Reading from the N-terminus, the 497-residue chain is L-arabinose isomerase (497 aa).

Residues Glu-306, Glu-331, His-348, and His-447 each contribute to the Mn(2+) site.

This sequence belongs to the arabinose isomerase family. Requires Mn(2+) as cofactor.

The catalysed reaction is beta-L-arabinopyranose = L-ribulose. Its pathway is carbohydrate degradation; L-arabinose degradation via L-ribulose; D-xylulose 5-phosphate from L-arabinose (bacterial route): step 1/3. Its function is as follows. Catalyzes the conversion of L-arabinose to L-ribulose. This Halalkalibacterium halodurans (strain ATCC BAA-125 / DSM 18197 / FERM 7344 / JCM 9153 / C-125) (Bacillus halodurans) protein is L-arabinose isomerase.